The chain runs to 88 residues: YcgL domain-containing protein NTHI1684 (88 aa).

The YcgL domain occupies Met-1–Ser-85.

This is YcgL domain-containing protein NTHI1684 from Haemophilus influenzae (strain 86-028NP).